We begin with the raw amino-acid sequence, 498 residues long: Pyridine nucleotide-disulfide oxidoreductase domain-containing protein 1 (498 aa).

Residue Met1 is modified to N-acetylmethionine.

The protein belongs to the class-I pyridine nucleotide-disulfide oxidoreductase family. PYROXD1 subfamily. FAD serves as cofactor.

It is found in the nucleus. The protein resides in the cytoplasm. The protein localises to the myofibril. Its subcellular location is the sarcomere. In terms of biological role, probable FAD-dependent oxidoreductase; involved in the cellular oxidative stress response. Required for normal sarcomere structure and muscle fiber integrity. This is Pyridine nucleotide-disulfide oxidoreductase domain-containing protein 1 (Pyroxd1) from Rattus norvegicus (Rat).